We begin with the raw amino-acid sequence, 339 residues long: MDFDPTAEQQAVADVVTSVLERDISWEALVCGGVTALPVPERLGGDGVGLFEVGALLTEVGRHGAVTPALATLGLGVVPLLELASAEQQDRFLAGVAKGGVLTAALNEPGAALPDRPATSFVGGRLSGTKVGVGYAEQADWMLVTADNAVVVVSPTADGVRMVRTPTSNGSDEYVMTMDGVAVADCDILADVAAHRVNQLALAVMGAYADGLVAGALRLTADYVANRKQFGKPLSTFQTVAAQLAEVYIASRTIDLVAKSVIWRLAEDLDAGDDLGVLGYWVTSQAPPAMQICHHLHGGMGMDVTYPMHRYYSTIKDLTRLLGGPSHRLELLGARCSLT.

Residues arginine 227, glutamine 238, histidine 295, and glycine 299 each coordinate FAD.

It belongs to the acyl-CoA dehydrogenase family. As to quaternary structure, heterotetramer composed of FadE28 and FadE29. The cofactor is FAD.

The catalysed reaction is 3-oxochol-4-en-22-oyl-CoA + A = 3-oxochola-4,17-dien-22-oyl-CoA + AH2. It functions in the pathway steroid metabolism; cholesterol degradation. In terms of biological role, involved in the third cycle of side chain dehydrogenation in the beta-oxidation of cholesterol catabolism. May play an important role for the initial macrophage invasion, possibly in response to the acidification of phagosome. It contributes partly to the virulence by increasing the efficiency of beta-oxidation. Catalyzes the dehydrogenation of 2'-propanoyl-CoA ester side chains of 3-oxo-4-pregnene-20-carboxyl-CoA (3-OPC-CoA) to yield 3-oxo-4,17-pregnadiene-20-carboxyl-CoA (3-OPDC-CoA). Also able to dehydrogenate steroyl-CoA such as 3-oxo-chol-4-en-24-oyl-CoA (3-OCO-CoA), 1beta-(2'-propanoyl-CoA)-3a-alpha-H-7a-beta-methylhexahydro-4-indanone (indanone-CoA ester), hexahydroindanone and pregenenone. In Mycobacterium tuberculosis (strain ATCC 25618 / H37Rv), this protein is Acyl-CoA dehydrogenase FadE28 (fadE28).